Here is a 101-residue protein sequence, read N- to C-terminus: Small ribosomal subunit protein uS10 (101 aa).

The protein belongs to the universal ribosomal protein uS10 family. In terms of assembly, part of the 30S ribosomal subunit.

Functionally, involved in the binding of tRNA to the ribosomes. The chain is Small ribosomal subunit protein uS10 from Ureaplasma parvum serovar 3 (strain ATCC 27815 / 27 / NCTC 11736).